We begin with the raw amino-acid sequence, 286 residues long: Pantothenate synthetase (286 aa).

30 to 37 (MGALHEGH) contacts ATP. His-37 functions as the Proton donor in the catalytic mechanism. Gln-61 contacts (R)-pantoate. Gln-61 provides a ligand contact to beta-alanine. ATP is bound at residue 147-150 (GEKD). Gln-153 is a (R)-pantoate binding site. ATP contacts are provided by residues Leu-176 and 184-187 (HSSR).

Belongs to the pantothenate synthetase family. Homodimer.

The protein localises to the cytoplasm. The catalysed reaction is (R)-pantoate + beta-alanine + ATP = (R)-pantothenate + AMP + diphosphate + H(+). It functions in the pathway cofactor biosynthesis; (R)-pantothenate biosynthesis; (R)-pantothenate from (R)-pantoate and beta-alanine: step 1/1. Its function is as follows. Catalyzes the condensation of pantoate with beta-alanine in an ATP-dependent reaction via a pantoyl-adenylate intermediate. The protein is Pantothenate synthetase of Bartonella tribocorum (strain CIP 105476 / IBS 506).